A 338-amino-acid polypeptide reads, in one-letter code: Ketol-acid reductoisomerase (NADP(+)) (338 aa).

The region spanning 1–181 is the KARI N-terminal Rossmann domain; it reads MKVFYDKDAD…GGGRAGIIET (181 aa). Residues 24–27, Arg47, and Ser52 contribute to the NADP(+) site; that span reads YGSQ. Residue His107 is part of the active site. Gly133 serves as a coordination point for NADP(+). The region spanning 182 to 327 is the KARI C-terminal knotted domain; that stretch reads NFREETETDL…AKLRAMMPWI (146 aa). Residues Asp190, Glu194, Glu226, and Glu230 each contribute to the Mg(2+) site. Residue Ser251 participates in substrate binding.

This sequence belongs to the ketol-acid reductoisomerase family. It depends on Mg(2+) as a cofactor.

It carries out the reaction (2R)-2,3-dihydroxy-3-methylbutanoate + NADP(+) = (2S)-2-acetolactate + NADPH + H(+). The catalysed reaction is (2R,3R)-2,3-dihydroxy-3-methylpentanoate + NADP(+) = (S)-2-ethyl-2-hydroxy-3-oxobutanoate + NADPH + H(+). It participates in amino-acid biosynthesis; L-isoleucine biosynthesis; L-isoleucine from 2-oxobutanoate: step 2/4. Its pathway is amino-acid biosynthesis; L-valine biosynthesis; L-valine from pyruvate: step 2/4. Functionally, involved in the biosynthesis of branched-chain amino acids (BCAA). Catalyzes an alkyl-migration followed by a ketol-acid reduction of (S)-2-acetolactate (S2AL) to yield (R)-2,3-dihydroxy-isovalerate. In the isomerase reaction, S2AL is rearranged via a Mg-dependent methyl migration to produce 3-hydroxy-3-methyl-2-ketobutyrate (HMKB). In the reductase reaction, this 2-ketoacid undergoes a metal-dependent reduction by NADPH to yield (R)-2,3-dihydroxy-isovalerate. This is Ketol-acid reductoisomerase (NADP(+)) from Cupriavidus necator (strain ATCC 17699 / DSM 428 / KCTC 22496 / NCIMB 10442 / H16 / Stanier 337) (Ralstonia eutropha).